Consider the following 644-residue polypeptide: Chaperone protein DnaK (644 aa).

T199 bears the Phosphothreonine; by autocatalysis mark. Positions 550-584 (ADKLDESEKQRAQDEIKRGREAMESGDLERMKASR) are enriched in basic and acidic residues. Disordered regions lie at residues 550–586 (ADKL…SRDS) and 599–644 (YSQA…EDKK). Low complexity predominate over residues 600 to 623 (SQAGPEQGAPGAEAGAGASQGASG).

It belongs to the heat shock protein 70 family.

Functionally, acts as a chaperone. In Leptospira biflexa serovar Patoc (strain Patoc 1 / Ames), this protein is Chaperone protein DnaK.